A 2051-amino-acid polypeptide reads, in one-letter code: Fatty acid synthase subunit beta (2051 aa).

Met1 carries the post-translational modification N-acetylmethionine. Residues 1 to 468 are acetyltransferase; that stretch reads MDAYSTRPLT…VYDTFDGSDL (468 aa). Ser274 (for acetyltransferase activity) is an active-site residue. Positions 480-868 are enoyl reductase; it reads VDCIIRLPVK…TRGVMLWKEF (389 aa). Thr733 carries the post-translational modification Phosphothreonine. Ser1121 is modified (phosphoserine). The interval 1144 to 1626 is dehydratase; it reads GSEINWRHAS…LPNTALKTSI (483 aa). Lys1364 is covalently cross-linked (Glycyl lysine isopeptide (Lys-Gly) (interchain with G-Cter in ubiquitin)). Residues 1523–1648 enclose the MaoC-like domain; the sequence is NGSTLEQKVN…KFETRNEDDV (126 aa). Residues 1627–1845 are malonyl/palmitoyl transferase; sequence QHVGMINGRK…MTMQVAVPRD (219 aa). Ser1808 functions as the For malonyltransferase activity in the catalytic mechanism.

Belongs to the fungal fatty acid synthetase subunit beta family. In terms of assembly, [Alpha(6)beta(6)] hexamers of two multifunctional subunits (alpha and beta).

The catalysed reaction is acetyl-CoA + n malonyl-CoA + 2n NADPH + 4n H(+) = a long-chain-acyl-CoA + n CoA + n CO2 + 2n NADP(+).. It carries out the reaction holo-[ACP] + acetyl-CoA = acetyl-[ACP] + CoA. The enzyme catalyses holo-[ACP] + malonyl-CoA = malonyl-[ACP] + CoA. It catalyses the reaction a (3R)-hydroxyacyl-[ACP] = a (2E)-enoyl-[ACP] + H2O. The catalysed reaction is a 2,3-saturated acyl-[ACP] + NAD(+) = a (2E)-enoyl-[ACP] + NADH + H(+). It carries out the reaction (9Z)-octadecenoyl-[ACP] + H2O = (9Z)-octadecenoate + holo-[ACP] + H(+). Functionally, fatty acid synthetase catalyzes the formation of long-chain fatty acids from acetyl-CoA, malonyl-CoA and NADPH. The beta subunit contains domains for: [acyl-carrier-protein] acetyltransferase and malonyltransferase, S-acyl fatty acid synthase thioesterase, enoyl-[acyl-carrier-protein] reductase, and 3-hydroxypalmitoyl-[acyl-carrier-protein] dehydratase. This Saccharomyces cerevisiae (strain ATCC 204508 / S288c) (Baker's yeast) protein is Fatty acid synthase subunit beta (FAS1).